The chain runs to 100 residues: Urease subunit gamma (100 aa).

This sequence belongs to the urease gamma subunit family. In terms of assembly, heterotrimer of UreA (gamma), UreB (beta) and UreC (alpha) subunits. Three heterotrimers associate to form the active enzyme.

Its subcellular location is the cytoplasm. The enzyme catalyses urea + 2 H2O + H(+) = hydrogencarbonate + 2 NH4(+). It participates in nitrogen metabolism; urea degradation; CO(2) and NH(3) from urea (urease route): step 1/1. The sequence is that of Urease subunit gamma from Mesorhizobium japonicum (strain LMG 29417 / CECT 9101 / MAFF 303099) (Mesorhizobium loti (strain MAFF 303099)).